The chain runs to 490 residues: Cis-aconitate decarboxylase (490 aa).

Belongs to the PrpD family. In terms of assembly, homodimer.

It is found in the mitochondrion. The catalysed reaction is cis-aconitate + H(+) = itaconate + CO2. In terms of biological role, involved in the production of itaconic acid, a soluble unsaturated dicarboxylic acid mainly produced from sugars. The sequence is that of Cis-aconitate decarboxylase (cad1) from Aspergillus terreus (strain NIH 2624 / FGSC A1156).